The sequence spans 878 residues: Alanine--tRNA ligase (878 aa).

Zn(2+) contacts are provided by His-564, His-568, Cys-665, and His-669.

The protein belongs to the class-II aminoacyl-tRNA synthetase family. The cofactor is Zn(2+).

Its subcellular location is the cytoplasm. The catalysed reaction is tRNA(Ala) + L-alanine + ATP = L-alanyl-tRNA(Ala) + AMP + diphosphate. Its function is as follows. Catalyzes the attachment of alanine to tRNA(Ala) in a two-step reaction: alanine is first activated by ATP to form Ala-AMP and then transferred to the acceptor end of tRNA(Ala). Also edits incorrectly charged Ser-tRNA(Ala) and Gly-tRNA(Ala) via its editing domain. The polypeptide is Alanine--tRNA ligase (Natranaerobius thermophilus (strain ATCC BAA-1301 / DSM 18059 / JW/NM-WN-LF)).